A 179-amino-acid polypeptide reads, in one-letter code: Large ribosomal subunit protein uL6 (179 aa).

It belongs to the universal ribosomal protein uL6 family. In terms of assembly, part of the 50S ribosomal subunit.

In terms of biological role, this protein binds to the 23S rRNA, and is important in its secondary structure. It is located near the subunit interface in the base of the L7/L12 stalk, and near the tRNA binding site of the peptidyltransferase center. This is Large ribosomal subunit protein uL6 from Crocosphaera subtropica (strain ATCC 51142 / BH68) (Cyanothece sp. (strain ATCC 51142)).